The following is a 31-amino-acid chain: Cytochrome b6-f complex subunit 6 (31 aa).

A helical membrane pass occupies residues 4 to 26; it reads LTSYFGFLLAALTITSALFIGLS.

It belongs to the PetL family. As to quaternary structure, the 4 large subunits of the cytochrome b6-f complex are cytochrome b6, subunit IV (17 kDa polypeptide, PetD), cytochrome f and the Rieske protein, while the 4 small subunits are PetG, PetL, PetM and PetN. The complex functions as a dimer.

The protein localises to the plastid. It is found in the chloroplast thylakoid membrane. In terms of biological role, component of the cytochrome b6-f complex, which mediates electron transfer between photosystem II (PSII) and photosystem I (PSI), cyclic electron flow around PSI, and state transitions. PetL is important for photoautotrophic growth as well as for electron transfer efficiency and stability of the cytochrome b6-f complex. This Aethionema cordifolium (Lebanon stonecress) protein is Cytochrome b6-f complex subunit 6.